Reading from the N-terminus, the 261-residue chain is MRILITNDDGINAPGLEVLEQIALQLAGPDGEVWTVAPAFEQSGVSHAISYTHPMMIAKLGPRRYAAEGSPADCVLAALYDVLQGARPDLVLSGVNRGNNSAENVLYSGTVGGALEAALQGLPAIALSQFLGPETEGLADPFECARTHGARIVRLLLERGLWDGEDYRLFYNVNFPPVPAANLRGHRVAAQGFRRDTSFGVEPHMSPSGRRFLWIRGGAQQSPTLPGTDAAVNLEGFVSITPLRADLTAHDRLAELEALIG.

A divalent metal cation-binding residues include D8, D9, S43, and N96.

Belongs to the SurE nucleotidase family. A divalent metal cation is required as a cofactor.

The protein localises to the cytoplasm. The catalysed reaction is a ribonucleoside 5'-phosphate + H2O = a ribonucleoside + phosphate. Functionally, nucleotidase that shows phosphatase activity on nucleoside 5'-monophosphates. This chain is 5'-nucleotidase SurE, found in Cereibacter sphaeroides (strain ATCC 17029 / ATH 2.4.9) (Rhodobacter sphaeroides).